Reading from the N-terminus, the 247-residue chain is ATP synthase subunit a, chloroplastic (247 aa).

A run of 5 helical transmembrane segments spans residues 38–58, 95–115, 134–154, 199–219, and 220–240; these read QVLITSWVVIAILLGSAIIAV, VPFIGTMFLFIFVSNWSGALL, INTTVALALLTSVAYFYAGLS, LVVVVLVSLVPLVVPIPVMFL, and GLFTSGIQALIFATLAAAYIG.

Belongs to the ATPase A chain family. As to quaternary structure, F-type ATPases have 2 components, CF(1) - the catalytic core - and CF(0) - the membrane proton channel. CF(1) has five subunits: alpha(3), beta(3), gamma(1), delta(1), epsilon(1). CF(0) has four main subunits: a, b, b' and c.

It localises to the plastid. The protein resides in the chloroplast thylakoid membrane. In terms of biological role, key component of the proton channel; it plays a direct role in the translocation of protons across the membrane. This Cucumis sativus (Cucumber) protein is ATP synthase subunit a, chloroplastic.